The following is a 638-amino-acid chain: Golgi integral membrane protein 4 (638 aa).

The Cytoplasmic portion of the chain corresponds to 1-12; it reads MGNGMCSRRQKR. A helical; Signal-anchor for type II membrane protein membrane pass occupies residues 13–33; it reads IFQALACLAVAIGFVYGAMLN. Topologically, residues 34–638 are lumenal; sequence YHLQNDLKKA…GVKNKRRAEM (605 aa). Golgi targeting stretches follow at residues 38-107 and 176-220; these read NDLK…RQDS and YNLR…SSLR. The stretch at 66–216 forms a coiled coil; it reads EHRSRLEKSL…VQLKKALNKM (151 aa). The tract at residues 80 to 175 is endosome targeting; it reads LEHKKAKEDF…QEHSKLKESI (96 aa). Disordered regions lie at residues 217 to 245, 280 to 415, and 455 to 638; these read SSLRQPEKDTVPIGRNNSPTIAPTQEHAT, RVKT…QQDL, and KQAE…RAEM. Composition is skewed to basic and acidic residues over residues 301 to 316 and 323 to 332; these read ATEHPVEVEEEHKKEL and QVGKPERLVE. A compositionally biased stretch (acidic residues) spans 348-361; sequence EDDALEGNNEEQKE. 3 stretches are compositionally biased toward basic and acidic residues: residues 402–414, 455–467, and 510–521; these read QMEEARHLKEQQD, KQAEYENVDHDIV, and AESREGQEKAAA. Acidic residues-rich tracts occupy residues 534–553 and 577–593; these read GEDEFEEAEQEREENLPDEN and QQEDNIDQQYQEEEEEE. The segment covering 594–615 has biased composition (basic and acidic residues); sequence RQIGAEREPDAQQEENKERNEE. Positions 616–626 are enriched in acidic residues; it reads NYEEEEEEEDG.

It belongs to the GOLIM4 family.

The protein resides in the golgi apparatus. The protein localises to the golgi stack membrane. It localises to the endosome membrane. In terms of biological role, may play a role in endosome to Golgi protein trafficking. The protein is Golgi integral membrane protein 4 (golim4) of Xenopus tropicalis (Western clawed frog).